Consider the following 426-residue polypeptide: Anaerobic glycerol-3-phosphate dehydrogenase subunit B (426 aa).

This sequence belongs to the anaerobic G-3-P dehydrogenase subunit B family. In terms of assembly, composed of a catalytic GlpA/B dimer and of membrane bound GlpC. FMN serves as cofactor.

The enzyme catalyses a quinone + sn-glycerol 3-phosphate = dihydroxyacetone phosphate + a quinol. The protein operates within polyol metabolism; glycerol degradation via glycerol kinase pathway; glycerone phosphate from sn-glycerol 3-phosphate (anaerobic route): step 1/1. Functionally, conversion of glycerol 3-phosphate to dihydroxyacetone. Uses fumarate or nitrate as electron acceptor. The polypeptide is Anaerobic glycerol-3-phosphate dehydrogenase subunit B (Haemophilus ducreyi (strain 35000HP / ATCC 700724)).